A 444-amino-acid chain; its full sequence is Transcriptional coactivator nsrH (444 aa).

The region spanning 74–144 is the HTH iclR-type domain; that stretch reads ASQVSEILAC…ERDHVAHTPL (71 aa). A DNA-binding region (H-T-H motif) is located at residues 104–123; it reads IKDIADLTNVPESRLRRIIR.

It is found in the nucleus. Its function is as follows. Transcriptional coactivator; part of the gene cluster that mediates the biosynthesis of the tetrahydroxanthone dimer neosartorin, which exhibits antibacterial activity. The sequence is that of Transcriptional coactivator nsrH from Aspergillus novofumigatus (strain IBT 16806).